Reading from the N-terminus, the 308-residue chain is MSAQKPGLHPRNRHHSRYDLATLCQVNPELRQFLTLTPAGEQSVDFANPLAVKALNKALLAHFYAVANWDIPDGFLCPPVPGRADYIHHLADLLAEASGTIPANASILDIGVGANCIYPLIGVHEYGWRFTGSETSSQALSSAQAIISANPGLNRAIRLRRQKESGAIFNGIIHKNEQYDATLCNPPFHDSAAAARAGSERKRRNLGLNKDDALNFGGQQQELWCEGGEVAFIKKMIEESKGFAKQVMWFTSLVSRGENLPPLYRALTDVGAVKVVKKEMAQGQKQSRFIAWTFMNDEQRRRFVNRQR.

It belongs to the methyltransferase superfamily. METTL16/RlmF family.

It localises to the cytoplasm. The catalysed reaction is adenosine(1618) in 23S rRNA + S-adenosyl-L-methionine = N(6)-methyladenosine(1618) in 23S rRNA + S-adenosyl-L-homocysteine + H(+). Functionally, specifically methylates the adenine in position 1618 of 23S rRNA. This is Ribosomal RNA large subunit methyltransferase F from Shigella boydii serotype 18 (strain CDC 3083-94 / BS512).